A 185-amino-acid chain; its full sequence is Ribosome-recycling factor (185 aa).

Belongs to the RRF family.

It is found in the cytoplasm. Its function is as follows. Responsible for the release of ribosomes from messenger RNA at the termination of protein biosynthesis. May increase the efficiency of translation by recycling ribosomes from one round of translation to another. In Azotobacter vinelandii (strain DJ / ATCC BAA-1303), this protein is Ribosome-recycling factor.